The primary structure comprises 360 residues: Peptide chain release factor 1 (360 aa).

An N5-methylglutamine modification is found at Gln-235. Residues 284–312 (ERQAQAQADTRRNLLGSGDRSDKIRTYNY) are disordered.

It belongs to the prokaryotic/mitochondrial release factor family. Methylated by PrmC. Methylation increases the termination efficiency of RF1.

It localises to the cytoplasm. Peptide chain release factor 1 directs the termination of translation in response to the peptide chain termination codons UAG and UAA. This chain is Peptide chain release factor 1, found in Histophilus somni (strain 129Pt) (Haemophilus somnus).